The chain runs to 393 residues: NAD(P)H-quinone oxidoreductase subunit H, chloroplastic (393 aa).

This sequence belongs to the complex I 49 kDa subunit family. As to quaternary structure, NDH is composed of at least 16 different subunits, 5 of which are encoded in the nucleus.

Its subcellular location is the plastid. The protein resides in the chloroplast thylakoid membrane. The catalysed reaction is a plastoquinone + NADH + (n+1) H(+)(in) = a plastoquinol + NAD(+) + n H(+)(out). It carries out the reaction a plastoquinone + NADPH + (n+1) H(+)(in) = a plastoquinol + NADP(+) + n H(+)(out). In terms of biological role, NDH shuttles electrons from NAD(P)H:plastoquinone, via FMN and iron-sulfur (Fe-S) centers, to quinones in the photosynthetic chain and possibly in a chloroplast respiratory chain. The immediate electron acceptor for the enzyme in this species is believed to be plastoquinone. Couples the redox reaction to proton translocation, and thus conserves the redox energy in a proton gradient. In Acorus calamus var. americanus (American sweet flag), this protein is NAD(P)H-quinone oxidoreductase subunit H, chloroplastic.